Here is a 420-residue protein sequence, read N- to C-terminus: Glutaryl-CoA dehydrogenase, mitochondrial (420 aa).

Position 125 to 126 (125 to 126) interacts with substrate; that stretch reads RS. Residues 164–167, Ser-173, and 198–200 each bind FAD; these read FGLT and WIT. Ser-173 provides a ligand contact to substrate. Residues 273–277 and Arg-280 contribute to the substrate site; that span reads FSCLN. Glu-400 acts as the Proton acceptor in catalysis. Residues Thr-402 and Phe-420 each contribute to the FAD site.

Belongs to the acyl-CoA dehydrogenase family. The cofactor is FAD.

Its subcellular location is the mitochondrion matrix. The catalysed reaction is glutaryl-CoA + oxidized [electron-transfer flavoprotein] + 2 H(+) = (2E)-butenoyl-CoA + reduced [electron-transfer flavoprotein] + CO2. It participates in amino-acid metabolism; lysine degradation. It functions in the pathway amino-acid metabolism; tryptophan metabolism. In Dictyostelium discoideum (Social amoeba), this protein is Glutaryl-CoA dehydrogenase, mitochondrial (gcdh).